Here is a 556-residue protein sequence, read N- to C-terminus: Arginine--tRNA ligase 2 (556 aa).

The 'HIGH' region signature appears at 132–142; it reads ANPTGDLHLGH.

It belongs to the class-I aminoacyl-tRNA synthetase family. Monomer.

The protein localises to the cytoplasm. The catalysed reaction is tRNA(Arg) + L-arginine + ATP = L-arginyl-tRNA(Arg) + AMP + diphosphate. The sequence is that of Arginine--tRNA ligase 2 from Bacillus thuringiensis subsp. konkukian (strain 97-27).